A 450-amino-acid chain; its full sequence is 3-phosphoshikimate 1-carboxyvinyltransferase (450 aa).

The segment at Met1 to Pro25 is disordered. Residues Lys28, Ser29, and Arg33 each coordinate 3-phosphoshikimate. Phosphoenolpyruvate is bound at residue Lys28. Phosphoenolpyruvate contacts are provided by Gly101 and Arg129. 3-phosphoshikimate-binding residues include Ser174, Gln176, Asp327, and Lys354. Gln176 is a binding site for phosphoenolpyruvate. Catalysis depends on Asp327, which acts as the Proton acceptor. Residues Arg358 and Arg403 each contribute to the phosphoenolpyruvate site.

Belongs to the EPSP synthase family. As to quaternary structure, monomer.

Its subcellular location is the cytoplasm. It carries out the reaction 3-phosphoshikimate + phosphoenolpyruvate = 5-O-(1-carboxyvinyl)-3-phosphoshikimate + phosphate. It participates in metabolic intermediate biosynthesis; chorismate biosynthesis; chorismate from D-erythrose 4-phosphate and phosphoenolpyruvate: step 6/7. In terms of biological role, catalyzes the transfer of the enolpyruvyl moiety of phosphoenolpyruvate (PEP) to the 5-hydroxyl of shikimate-3-phosphate (S3P) to produce enolpyruvyl shikimate-3-phosphate and inorganic phosphate. In Jannaschia sp. (strain CCS1), this protein is 3-phosphoshikimate 1-carboxyvinyltransferase.